The following is a 126-amino-acid chain: MRENKSNPELKIRSTERDYKYISRITGRYAGLSLVFLTAGIVLWTVMDIIFDACIDSWKADPELNNSSYMWNILIYAIPYTLYALAAGFLVTFFSVPNVRINIRKYRDIPAEMSYAPGEHIKGGQE.

Helical transmembrane passes span 31 to 54 (GLSLVFLTAGIVLWTVMDIIFDAC) and 71 to 98 (WNILIYAIPYTLYALAAGFLVTFFSVPN).

Its subcellular location is the cell inner membrane. This is Protein TrbF (trbF) from Escherichia coli (strain K12).